A 510-amino-acid polypeptide reads, in one-letter code: Maturase K (510 aa).

This sequence belongs to the intron maturase 2 family. MatK subfamily.

Its subcellular location is the plastid. The protein resides in the chloroplast. Usually encoded in the trnK tRNA gene intron. Probably assists in splicing its own and other chloroplast group II introns. This Mammillaria haageana (Cactus) protein is Maturase K.